The sequence spans 327 residues: Transcription factor bHLH71 (327 aa).

2 disordered regions span residues 46 to 88 (ISEI…NQRM) and 151 to 176 (AKLN…HQPS). The segment covering 65 to 76 (RGKKRRRRKPRV) has biased composition (basic residues). A compositionally biased stretch (basic and acidic residues) spans 77 to 88 (CKNEEEAENQRM). Positions 85-136 (NQRMTHIAVERNRRRQMNQHLSVLRSLMPQPFAHKGDQASIVGGAIDFIKEL) constitute a bHLH domain. The segment covering 152–169 (KLNQSVTSSTSQDSNGEQ) has biased composition (polar residues).

Homodimer. Interacts with FAMA. Expressed in leaves, stems, and flowers.

The protein localises to the nucleus. Its function is as follows. Transcription factor. May be involved in the differentiation of stomatal guard cells. This Arabidopsis thaliana (Mouse-ear cress) protein is Transcription factor bHLH71 (BHLH71).